The following is a 413-amino-acid chain: uncharacterized protein (413 aa).

Helical transmembrane passes span 42-62, 75-95, 109-129, 133-153, 157-179, 191-211, 238-258, 265-285, 304-324, 326-346, 362-382, and 383-403; these read FLGG…LPVF, LSLS…GPLS, LIAA…VIVF, LTGL…VEEV, SVSF…GRIL, IAFI…LYFL, PTLL…ITIF, LMLS…IIYL, SSIL…TQYN, IFII…SHSI, ATSL…TFGG, and FFWF…ILIF.

The protein belongs to the major facilitator superfamily.

It localises to the cell membrane. This is an uncharacterized protein from Buchnera aphidicola subsp. Schizaphis graminum (strain Sg).